Consider the following 420-residue polypeptide: Glucose-1-phosphate adenylyltransferase (420 aa).

Residues Tyr-107, Gly-172, 187–188 (EK), and Ser-205 each bind alpha-D-glucose 1-phosphate.

Belongs to the bacterial/plant glucose-1-phosphate adenylyltransferase family. As to quaternary structure, homotetramer.

It catalyses the reaction alpha-D-glucose 1-phosphate + ATP + H(+) = ADP-alpha-D-glucose + diphosphate. Its pathway is glycan biosynthesis; glycogen biosynthesis. Functionally, involved in the biosynthesis of ADP-glucose, a building block required for the elongation reactions to produce glycogen. Catalyzes the reaction between ATP and alpha-D-glucose 1-phosphate (G1P) to produce pyrophosphate and ADP-Glc. In Bradyrhizobium diazoefficiens (strain JCM 10833 / BCRC 13528 / IAM 13628 / NBRC 14792 / USDA 110), this protein is Glucose-1-phosphate adenylyltransferase.